The primary structure comprises 396 residues: Tryptophan synthase beta chain (396 aa).

The residue at position 86 (Lys86) is an N6-(pyridoxal phosphate)lysine.

Belongs to the TrpB family. As to quaternary structure, tetramer of two alpha and two beta chains. Pyridoxal 5'-phosphate is required as a cofactor.

It carries out the reaction (1S,2R)-1-C-(indol-3-yl)glycerol 3-phosphate + L-serine = D-glyceraldehyde 3-phosphate + L-tryptophan + H2O. It functions in the pathway amino-acid biosynthesis; L-tryptophan biosynthesis; L-tryptophan from chorismate: step 5/5. In terms of biological role, the beta subunit is responsible for the synthesis of L-tryptophan from indole and L-serine. In Francisella philomiragia subsp. philomiragia (strain ATCC 25017 / CCUG 19701 / FSC 153 / O#319-036), this protein is Tryptophan synthase beta chain.